We begin with the raw amino-acid sequence, 107 residues long: SFAGLNDADVAAALAACAAADSFNHKAFFAKXXXXXXSPDDLKKXXXXLDQDKSGFLEEDELKLFLQNFSASARALTDAETKXXXXAGDADGDGMLGLDEFAVLVKQ.

Position 1 is an N-acetylserine (serine 1). 2 consecutive EF-hand domains span residues residue 37 to serine 72 and aspartate 89 to glutamine 107. 11 residues coordinate Ca(2+): aspartate 50, aspartate 52, serine 54, phenylalanine 56, glutamate 58, glutamate 61, aspartate 89, aspartate 91, aspartate 93, methionine 95, and glutamate 100.

It belongs to the parvalbumin family.

In muscle, parvalbumin is thought to be involved in relaxation after contraction. It binds two calcium ions. The protein is Parvalbumin beta 2 of Oncorhynchus mykiss (Rainbow trout).